We begin with the raw amino-acid sequence, 448 residues long: Chromosomal replication initiator protein DnaA 1 (448 aa).

A domain I, interacts with DnaA modulators region spans residues 1-76 (MLTSETQNVW…FLPVDMSGEP (76 aa)). The interval 76-111 (PAIRFIIAPPQKKIIPPNHFSISSSQKEEQSPNSDV) is domain II. The interval 112–328 (KLNNNYRFEN…GAINRLSAHC (217 aa)) is domain III, AAA+ region. ATP is bound by residues Gly-156, Gly-158, Lys-159, and Thr-160. Positions 329–448 (RLLDLNITEE…IGMVRRNIES (120 aa)) are domain IV, binds dsDNA.

Belongs to the DnaA family. As to quaternary structure, oligomerizes as a right-handed, spiral filament on DNA at oriC.

It is found in the cytoplasm. Plays an essential role in the initiation and regulation of chromosomal replication. ATP-DnaA binds to the origin of replication (oriC) to initiate formation of the DNA replication initiation complex once per cell cycle. Binds the DnaA box (a 9 base pair repeat at the origin) and separates the double-stranded (ds)DNA. Forms a right-handed helical filament on oriC DNA; dsDNA binds to the exterior of the filament while single-stranded (ss)DNA is stabiized in the filament's interior. The ATP-DnaA-oriC complex binds and stabilizes one strand of the AT-rich DNA unwinding element (DUE), permitting loading of DNA polymerase. After initiation quickly degrades to an ADP-DnaA complex that is not apt for DNA replication. Binds acidic phospholipids. This chain is Chromosomal replication initiator protein DnaA 1, found in Protochlamydia amoebophila (strain UWE25).